A 127-amino-acid chain; its full sequence is S-adenosylmethionine decarboxylase proenzyme 2 (127 aa).

The active-site Schiff-base intermediate with substrate; via pyruvic acid is Ser-63. Residue Ser-63 is modified to Pyruvic acid (Ser); by autocatalysis. His-68 functions as the Proton acceptor; for processing activity in the catalytic mechanism. Cys-83 functions as the Proton donor; for catalytic activity in the catalytic mechanism.

Belongs to the prokaryotic AdoMetDC family. Type 1 subfamily. In terms of assembly, heterotetramer of two alpha and two beta chains arranged as a dimer of alpha/beta heterodimers. The cofactor is pyruvate. Post-translationally, is synthesized initially as an inactive proenzyme. Formation of the active enzyme involves a self-maturation process in which the active site pyruvoyl group is generated from an internal serine residue via an autocatalytic post-translational modification. Two non-identical subunits are generated from the proenzyme in this reaction, and the pyruvate is formed at the N-terminus of the alpha chain, which is derived from the carboxyl end of the proenzyme. The post-translation cleavage follows an unusual pathway, termed non-hydrolytic serinolysis, in which the side chain hydroxyl group of the serine supplies its oxygen atom to form the C-terminus of the beta chain, while the remainder of the serine residue undergoes an oxidative deamination to produce ammonia and the pyruvoyl group blocking the N-terminus of the alpha chain.

The enzyme catalyses S-adenosyl-L-methionine + H(+) = S-adenosyl 3-(methylsulfanyl)propylamine + CO2. The protein operates within amine and polyamine biosynthesis; S-adenosylmethioninamine biosynthesis; S-adenosylmethioninamine from S-adenosyl-L-methionine: step 1/1. Catalyzes the decarboxylation of S-adenosylmethionine to S-adenosylmethioninamine (dcAdoMet), the propylamine donor required for the synthesis of the polyamines spermine and spermidine from the diamine putrescine. The sequence is that of S-adenosylmethionine decarboxylase proenzyme 2 from Halalkalibacterium halodurans (strain ATCC BAA-125 / DSM 18197 / FERM 7344 / JCM 9153 / C-125) (Bacillus halodurans).